The chain runs to 26 residues: Stage V sporulation protein M (26 aa).

Residues 3–9 form an important for localization region; the sequence is FYTIKLP.

In terms of assembly, interacts with SpoIVA. May interact with the ATP-dependent protease FtsH.

It localises to the forespore outer membrane. In terms of biological role, coordinates cortex and coat assembly during sporulation. Associates with the spore coat protein SpoIVA and with the outer forespore membrane, thereby serving as a membrane anchor that tethers SpoIVA and the entire spore coat to the forespore surface. May also serve as a competitive inhibitor of FtsH activity during sporulation. The protein is Stage V sporulation protein M of Bacillus subtilis (strain 168).